Reading from the N-terminus, the 73-residue chain is Beta-defensin 40 (73 aa).

The N-terminal stretch at 1–23 (MKISCFLLMIFFLSCFQINPVAV) is a signal peptide. 3 disulfide bridges follow: Cys29–Cys58, Cys36–Cys51, and Cys41–Cys59.

The protein belongs to the beta-defensin family. As to expression, only expressed in epididymis (corpus, cauda and caput).

Its subcellular location is the secreted. Its function is as follows. Has antibacterial activity. The protein is Beta-defensin 40 (Defb40) of Mus musculus (Mouse).